Reading from the N-terminus, the 484-residue chain is Tubulin-like protein TubZ (484 aa).

A GTP-binding site is contributed by 32-33 (QK). Mg(2+) is bound at residue D64. GTP is bound by residues 140-142 (GVG), N213, K237, and N241. The interval 408–484 (RKQDEEKVDI…LKTSNPFKKR (77 aa)) is required to bind TubR-DNA complex. A disordered region spans residues 428 to 484 (TFNPYNKNQGFGGASRFSGGKNSAFKRQTSEATSTQNQQEEENIISTLKTSNPFKKR). The segment covering 452-484 (FKRQTSEATSTQNQQEEENIISTLKTSNPFKKR) has biased composition (polar residues).

The protein belongs to the FtsZ family. TubZ subfamily. Forms filaments; a 2-stranded filament forms with the non-hydrolyzable GTP-gamma-S which is probably a precursor to the 4-stranded filament that forms in the presence of GTP. The 4-stranded form binds GDP. In vivo polymerizes to form dynamic filaments that often extend from one cell pole to the other, moving in a unidirectional manner. Filaments polymerize at the plus end and depolymerize at the minus end, a process called treadmilling. Polymerization only occurs above a critical concentration, it does not require upstream tubR. The tubC DNA-TubR complex binds to TubZ. It depends on Mg(2+) as a cofactor.

Its subcellular location is the cytoplasm. It catalyses the reaction GTP + H2O = GDP + phosphate + H(+). Its activity is regulated as follows. GTPase is inhibited by GTP-gamma-S, which also stabilizes filaments. Functionally, a tubulin-like, filament forming GTPase; the motor component of the type III plasmid partition system which ensures correct segregation of the pBtoxis plasmid. Filaments may seed from the centromere-like site (tubC) when bound by DNA-binding protein TubR; the tubC-TubR complex stabilizes the TubZ filament. Filaments grow at the plus end and depolymerize at the minus end, a process called treadmilling. TubR-tubC complexes track the depolymerizing minus end of the filament, probably pulling plasmid within the cell. Required for pBtoxis plasmid replication/partition. Binds the TubR-tubC complex; GTP is not required for binding to TubR-tubC. TubZ alone does not bind DNA. Has a high GTPase activity in the presence of Mg(2+); in the presence of GTP assembles into dynamic filaments which upon polymerization bind almost exclusively GDP. Filament formation is cooperative, requiring a critical concentration. Formation occurs very quickly and is followed by disassembly as GTP is consumed. The polypeptide is Tubulin-like protein TubZ (Bacillus thuringiensis subsp. israelensis).